The primary structure comprises 564 residues: Cysteine--tRNA ligase CPS1, chloroplastic/mitochondrial (564 aa).

Residues 1–43 (MAAAVVVRRAAGLIPLLSSRFGARMPLHRALSQIPPPRFCRLL) constitute a chloroplast and mitochondrion transit peptide. Cys-93 serves as a coordination point for Zn(2+). The 'HIGH' region motif lies at 95–105 (VTPYDDSHIGH). Positions 273, 298, and 302 each coordinate Zn(2+). The short motif at 330-334 (KMSKS) is the 'KMSKS' region element. Lys-333 serves as a coordination point for ATP.

It belongs to the class-I aminoacyl-tRNA synthetase family. Zn(2+) serves as cofactor.

The protein localises to the plastid. It is found in the chloroplast. Its subcellular location is the mitochondrion. It carries out the reaction tRNA(Cys) + L-cysteine + ATP = L-cysteinyl-tRNA(Cys) + AMP + diphosphate. Functionally, nuclear genome-encoded factor required for normal assembly of chloroplast polysomes. This Zea mays (Maize) protein is Cysteine--tRNA ligase CPS1, chloroplastic/mitochondrial.